Consider the following 434-residue polypeptide: Arrestin domain-containing protein 1 (434 aa).

The tract at residues 295–345 (PGPGSSPGLLSPVVPSAPPQEEAEAVASGPHFSDPVSLSTKSHSQQQPLST) is disordered. The segment covering 330–342 (VSLSTKSHSQQQP) has biased composition (polar residues). 2 short sequence motifs (PPxY motif) span residues 401-404 (PPEY) and 414-417 (PPSY).

Belongs to the arrestin family. As to quaternary structure, interacts (via PPxY motifs) with ITCH (via WW domains); the interaction is direct and participates in the recruitment of the ubiquitin-protein ligase ITCH to the NOTCH1 receptor. Interacts with ARRB1 and ARRB2; the interaction is direct. Interacts with TSG101; may recruit TSG101 to the plasma membrane. Interacts (via PPxY motifs) with WWP2 (via WW domains); ubiquitinates ARRDC1. Interacts with SLC11A2; controls the incorporation of SLC11A2 into extracellular vesicles through an ubiquitination-dependent mechanism. Interacts with WWP1 (via WW domains). Interacts with NEDD4 (via WW domains). Interacts with PDCD6IP. Post-translationally, ubiquitinated. Ubiquitination by WWP2; promotes localization to extracellular microvesicles. Ubiquitinated by WWP1.

The protein resides in the cell membrane. In terms of biological role, functions as an adapter recruiting ubiquitin-protein ligases to their specific substrates. Through an ubiquitination-dependent mechanism plays for instance a role in the incorporation of SLC11A2 into extracellular vesicles. More generally, plays a role in the extracellular transport of proteins between cells through the release in the extracellular space of microvesicles. By participating in the ITCH-mediated ubiquitination and subsequent degradation of NOTCH1, negatively regulates the NOTCH signaling pathway. The sequence is that of Arrestin domain-containing protein 1 from Rattus norvegicus (Rat).